Consider the following 860-residue polypeptide: DNA mismatch repair protein MutS (860 aa).

Residue 607–614 (GPNMSGKS) participates in ATP binding.

This sequence belongs to the DNA mismatch repair MutS family.

This protein is involved in the repair of mismatches in DNA. It is possible that it carries out the mismatch recognition step. This protein has a weak ATPase activity. In Listeria innocua serovar 6a (strain ATCC BAA-680 / CLIP 11262), this protein is DNA mismatch repair protein MutS.